Consider the following 379-residue polypeptide: Dual-specificity RNA methyltransferase RlmN (379 aa).

Glu96 serves as the catalytic Proton acceptor. Residues 102–342 (TDDRGTLCVS…TRTTRGDDID (241 aa)) enclose the Radical SAM core domain. Cys109 and Cys345 are disulfide-bonded. [4Fe-4S] cluster-binding residues include Cys116, Cys120, and Cys123. S-adenosyl-L-methionine contacts are provided by residues 170-171 (GE), Ser202, 224-226 (SLH), and Asn302. The active-site S-methylcysteine intermediate is Cys345.

The protein belongs to the radical SAM superfamily. RlmN family. It depends on [4Fe-4S] cluster as a cofactor.

The protein localises to the cytoplasm. The catalysed reaction is adenosine(2503) in 23S rRNA + 2 reduced [2Fe-2S]-[ferredoxin] + 2 S-adenosyl-L-methionine = 2-methyladenosine(2503) in 23S rRNA + 5'-deoxyadenosine + L-methionine + 2 oxidized [2Fe-2S]-[ferredoxin] + S-adenosyl-L-homocysteine. The enzyme catalyses adenosine(37) in tRNA + 2 reduced [2Fe-2S]-[ferredoxin] + 2 S-adenosyl-L-methionine = 2-methyladenosine(37) in tRNA + 5'-deoxyadenosine + L-methionine + 2 oxidized [2Fe-2S]-[ferredoxin] + S-adenosyl-L-homocysteine. Functionally, specifically methylates position 2 of adenine 2503 in 23S rRNA and position 2 of adenine 37 in tRNAs. m2A2503 modification seems to play a crucial role in the proofreading step occurring at the peptidyl transferase center and thus would serve to optimize ribosomal fidelity. The protein is Dual-specificity RNA methyltransferase RlmN of Pseudomonas entomophila (strain L48).